The primary structure comprises 200 residues: CASP-like protein 1D2 (200 aa).

The segment at 1–26 (MASTENPDPETGKSEPIPASATTPPP) is disordered. Residues 1–36 (MASTENPDPETGKSEPIPASATTPPPSAASFLDCRK) lie on the Cytoplasmic side of the membrane. A helical membrane pass occupies residues 37–57 (IDVIIRVLLFSATLTALIVMV). The Extracellular segment spans residues 58–85 (TSDQTEKTQLPGVSSPAPVSAEFNDSPA). Residues 86 to 106 (FIFFVVALVVTSFYALMSTLV) form a helical membrane-spanning segment. Over 107–129 (SISLLLKPEFTARVSVYLASLDM) the chain is Cytoplasmic. The chain crosses the membrane as a helical span at residues 130-150 (VMLGILASATGTAGGVAYIAL). Residues 151 to 171 (KGNKEVGWNKICNVYDKFCRY) lie on the Extracellular side of the membrane. The chain crosses the membrane as a helical span at residues 172 to 192 (IATSLALSLFATLLLLVLSIC). Over 193–200 (SALSKRTP) the chain is Cytoplasmic.

This sequence belongs to the Casparian strip membrane proteins (CASP) family. Homodimer and heterodimers.

The protein localises to the cell membrane. In Arabidopsis lyrata subsp. lyrata (Lyre-leaved rock-cress), this protein is CASP-like protein 1D2.